The sequence spans 377 residues: MYLKSLQLRYFRNYREQVIDFAAPKTILVGQNAQGKSNLLEAVELLSTLRSHRSHRDRELVLSGQENGQIIATIERDSGPLDLTLNLRSNGRRTLMVNSEPVRRHLDFLGHLNAVEFSSLDLDLVRGTPAERRNWLDNVLIQLEPFYAHLLQQYNHVLRQRNAFLKSYQREGSLDHTELKLWDQQLASTGTRLTRRRQRLLVRLAPLATHWHQAISGKNEDLQVHYAPNVPLEGDEPEAIYQAFLEKLQQKAIAEQHQGTSLVGPHRDEVELIINQTPARQYGSQGQQRTLVLALKLAELKLIEEVIGEPPLLLLDDVLAELDLQRQNQLLETIQDRFQTLITTTHLGAFDAQWLKSAQILEVAGGVIFNSNHCDRR.

Residue 30-37 (GQNAQGKS) coordinates ATP.

The protein belongs to the RecF family.

The protein localises to the cytoplasm. In terms of biological role, the RecF protein is involved in DNA metabolism; it is required for DNA replication and normal SOS inducibility. RecF binds preferentially to single-stranded, linear DNA. It also seems to bind ATP. This is DNA replication and repair protein RecF from Cyanothece sp. (strain PCC 7425 / ATCC 29141).